Here is a 76-residue protein sequence, read N- to C-terminus: XVAFETVPVDLMKGEHKQPAYLALQPFGTVPAVVDGDYXLLSAVLDVYEAHLHGYLAGDFVSLADLAHLPFTDYLV.

The GST N-terminal domain maps to 1-40 (XVAFETVPVDLMKGEHKQPAYLALQPFGTVPAVVDGDYXL). The 36-residue stretch at 41 to 76 (LSAVLDVYEAHLHGYLAGDFVSLADLAHLPFTDYLV) folds into the GST C-terminal domain.

It belongs to the GST superfamily. Theta family.

The protein resides in the cytoplasm. The catalysed reaction is RX + glutathione = an S-substituted glutathione + a halide anion + H(+). Functionally, conjugation of reduced glutathione to a wide number of exogenous and endogenous hydrophobic electrophiles. This chain is Glutathione S-transferase, found in Brassica oleracea var. italica (Broccoli).